Consider the following 127-residue polypeptide: Large ribosomal subunit protein bL12 (127 aa).

This sequence belongs to the bacterial ribosomal protein bL12 family. As to quaternary structure, homodimer. Part of the ribosomal stalk of the 50S ribosomal subunit. Forms a multimeric L10(L12)X complex, where L10 forms an elongated spine to which 2 to 4 L12 dimers bind in a sequential fashion. Binds GTP-bound translation factors.

Its function is as follows. Forms part of the ribosomal stalk which helps the ribosome interact with GTP-bound translation factors. Is thus essential for accurate translation. The protein is Large ribosomal subunit protein bL12 of Carboxydothermus hydrogenoformans (strain ATCC BAA-161 / DSM 6008 / Z-2901).